A 294-amino-acid polypeptide reads, in one-letter code: Homeobox protein Nkx-2.5 (294 aa).

Disordered regions lie at residues 48–69 and 102–122; these read GSEPPALPELPEPPPAKPPAAF and EQEKRELEDPERPRQRKRRKP. The span at 52 to 69 shows a compositional bias: pro residues; sequence PALPELPEPPPAKPPAAF. Over residues 102-114 the composition is skewed to basic and acidic residues; it reads EQEKRELEDPERP. The segment at residues 119 to 178 is a DNA-binding region (homeobox); it reads RRKPRVLFSQAQVYELERRFKQQKYLSAPERDHLANVLKLTSTQVKIWFQNRRYKCKRQR.

Belongs to the NK-2 homeobox family. In terms of assembly, homodimer (via the homeobox); binds DNA as homodimer.

It localises to the nucleus. Transcription factor required for the development of the heart and the spleen. Implicated in commitment to and/or differentiation of the myocardial lineage. Binds to the core DNA motif of promoter. The chain is Homeobox protein Nkx-2.5 (NKX-2.5) from Gallus gallus (Chicken).